Consider the following 714-residue polypeptide: DNA ligase (714 aa).

NAD(+) contacts are provided by residues Asp47–Asp51, Ser96–Leu97, and Glu130. Catalysis depends on Lys132, which acts as the N6-AMP-lysine intermediate. 4 residues coordinate NAD(+): Arg153, Glu190, Lys306, and Lys330. 4 residues coordinate Zn(2+): Cys435, Cys438, Cys453, and Cys459. In terms of domain architecture, BRCT spans Arg636–Gly714.

Belongs to the NAD-dependent DNA ligase family. LigA subfamily. The cofactor is Mg(2+). It depends on Mn(2+) as a cofactor.

It carries out the reaction NAD(+) + (deoxyribonucleotide)n-3'-hydroxyl + 5'-phospho-(deoxyribonucleotide)m = (deoxyribonucleotide)n+m + AMP + beta-nicotinamide D-nucleotide.. Its function is as follows. DNA ligase that catalyzes the formation of phosphodiester linkages between 5'-phosphoryl and 3'-hydroxyl groups in double-stranded DNA using NAD as a coenzyme and as the energy source for the reaction. It is essential for DNA replication and repair of damaged DNA. The protein is DNA ligase of Nitrobacter hamburgensis (strain DSM 10229 / NCIMB 13809 / X14).